Here is a 190-residue protein sequence, read N- to C-terminus: MSNDTGADGGAANPDLGPDADAAAGEGLELAQFAAGCFWSVELTYQRLPGVARTEVGFSQGHHHEPTYDDVCGQGTGHAEVVRVHYDPKACPYGVLLDVFWAKHRPTTLIRQGDEAGTQYRSGIYYYTAEQERVARESLEAKQEEWKEKIVTEILPARRFYPAEEYHQRYLEKGGQSAQKGCTDPIRRYG.

The disordered stretch occupies residues 1 to 20 (MSNDTGADGGAANPDLGPDA). The span at 10–20 (GAANPDLGPDA) shows a compositional bias: low complexity.

This sequence belongs to the MsrA Met sulfoxide reductase family.

Its subcellular location is the cytoplasm. It localises to the cytosol. It catalyses the reaction L-methionyl-[protein] + [thioredoxin]-disulfide + H2O = L-methionyl-(S)-S-oxide-[protein] + [thioredoxin]-dithiol. The catalysed reaction is [thioredoxin]-disulfide + L-methionine + H2O = L-methionine (S)-S-oxide + [thioredoxin]-dithiol. Catalyzes the reduction of methionine sulfoxide (MetSO) to methionine in proteins. Plays a protective role against oxidative stress by restoring activity to proteins that have been inactivated by methionine oxidation. MSRA family specifically reduces the MetSO S-enantiomer. The polypeptide is Peptide methionine sulfoxide reductase A2-2 (MSRA2-2) (Oryza sativa subsp. japonica (Rice)).